Reading from the N-terminus, the 687-residue chain is DNA-directed RNA polymerase subunit beta' (687 aa).

Zn(2+) is bound by residues Cys76, Cys78, Cys94, and Cys97. Mg(2+)-binding residues include Asp496, Asp498, and Asp500.

It belongs to the RNA polymerase beta' chain family. RpoC1 subfamily. In plastids the minimal PEP RNA polymerase catalytic core is composed of four subunits: alpha, beta, beta', and beta''. When a (nuclear-encoded) sigma factor is associated with the core the holoenzyme is formed, which can initiate transcription. The cofactor is Mg(2+). Zn(2+) serves as cofactor.

It is found in the plastid. Its subcellular location is the chloroplast. It catalyses the reaction RNA(n) + a ribonucleoside 5'-triphosphate = RNA(n+1) + diphosphate. DNA-dependent RNA polymerase catalyzes the transcription of DNA into RNA using the four ribonucleoside triphosphates as substrates. This chain is DNA-directed RNA polymerase subunit beta', found in Ipomoea purpurea (Common morning glory).